Consider the following 211-residue polypeptide: Small ribosomal subunit protein eS1 (211 aa).

It belongs to the eukaryotic ribosomal protein eS1 family.

This chain is Small ribosomal subunit protein eS1, found in Archaeoglobus fulgidus (strain ATCC 49558 / DSM 4304 / JCM 9628 / NBRC 100126 / VC-16).